Here is a 306-residue protein sequence, read N- to C-terminus: Nucleotide-binding protein RSal33209_2275 (306 aa).

29-36 (GMSGAGRS) is a binding site for ATP. 80–83 (DVRG) is a binding site for GTP.

The protein belongs to the RapZ-like family.

Functionally, displays ATPase and GTPase activities. The chain is Nucleotide-binding protein RSal33209_2275 from Renibacterium salmoninarum (strain ATCC 33209 / DSM 20767 / JCM 11484 / NBRC 15589 / NCIMB 2235).